The primary structure comprises 428 residues: MKTSLFKSLYFQVLTAIAIGILLGHYYPELGAQMKPLGDAFVKLIKMVIAPVIFCTVVTGIAGMESMKAVGRTGAVALLYFEIVSTIALIIGLIIVNVVQPGSGMNVDPATLDAKAVAIYAEQAKDQGIVGFLMDIIPGSVIGAFASGNILQVLLFAVMFGFALHRLGSKGQLIFNVIESFSQVIFGIINMIMRLAPIGAFGAMAFTIGKYGVGTLVQLGQLIVCFYITCILFVVVVLGSIARAAGFSIFKFIRYIREELLIVLGTSSSESVLPRMLDKMEKLGCRKSVVGLVIPTGYSFNLDGTSIYLTMAAVFIAQATNSHMDIFHQVTLLVVLLLSSKGAAGVTGSGFIVLAATISAVGHLPVAGLALILGIDRFMSEARALTNLVGNGVATVVVAKWVKELDHKKLDDVLNNRAPDGKTHELSS.

9 helical membrane-spanning segments follow: residues 4–24 (SLFK…ILLG), 44–64 (LIKM…IAGM), 76–96 (VALL…LIIV), 142–162 (IGAF…MFGF), 184–204 (VIFG…FGAM), 222–242 (LIVC…GSIA), 289–309 (VVGL…SIYL), 326–346 (IFHQ…AAGV), and 352–372 (IVLA…LALI).

This sequence belongs to the dicarboxylate/amino acid:cation symporter (DAACS) (TC 2.A.23) family.

It localises to the cell inner membrane. Its function is as follows. Responsible for the transport of dicarboxylates such as succinate, fumarate, and malate from the periplasm across the membrane. This chain is C4-dicarboxylate transport protein, found in Citrobacter koseri (strain ATCC BAA-895 / CDC 4225-83 / SGSC4696).